Here is a 133-residue protein sequence, read N- to C-terminus: Binder of sperm protein homolog 1 (133 aa).

The signal sequence occupies residues 1-20 (MAQPLDFLLVSICLFHSLFS). Fibronectin type-II domains lie at 40–84 (TEDG…YCAL) and 85–133 (SDYA…YCIE). 4 cysteine pairs are disulfide-bonded: C45–C69, C59–C82, C90–C116, and C104–C131. N-linked (GlcNAc...) asparagine glycosylation is present at N72.

The protein belongs to the seminal plasma protein family. As to expression, expressed only in the epididymis.

The protein resides in the secreted. Functionally, binds sperm in vitro and promotes sperm capacitation. Specifically promotes capacitation induced by high density lipoproteins (HDLs). Also binds heparin, phospholipid liposomes, and weakly to gelatin. Does not bind chondroitin sulfate B. In Mus musculus (Mouse), this protein is Binder of sperm protein homolog 1 (Bsph1).